The sequence spans 275 residues: MTLQQEIIQALGAKPHINPEEEIRRSVDFLKAYLKTYPFLKSLVLGISGGQDSTLAGKLSQMAIAELREETGDNALQFIAVRLPYGAQADEQDCQDAIAFIQPDRVLTVNIKGAVLASEQALREAGIELSDFVRGNEKARERMKAQYSIAGMTHGVVVGTDHAAEAITGFFTKYGDGGTDINPLHRLNKRQGKQLLAALGCPEHLYKKVPTADLEDDRPSLPDEAALGVTYDNIDDYLEGKTLDSAIAKTIEGWYVKTEHKRRLPITVFDDFWKK.

46–53 is a binding site for ATP; the sequence is GISGGQDS. D52 contacts Mg(2+). A deamido-NAD(+)-binding site is contributed by R140. ATP is bound at residue T160. E165 is a Mg(2+) binding site. Deamido-NAD(+) contacts are provided by K173 and D180. ATP-binding residues include K189 and T211. A deamido-NAD(+)-binding site is contributed by 260 to 261; sequence HK.

The protein belongs to the NAD synthetase family. Homodimer.

It carries out the reaction deamido-NAD(+) + NH4(+) + ATP = AMP + diphosphate + NAD(+) + H(+). Its pathway is cofactor biosynthesis; NAD(+) biosynthesis; NAD(+) from deamido-NAD(+) (ammonia route): step 1/1. Its function is as follows. Catalyzes the ATP-dependent amidation of deamido-NAD to form NAD. Uses ammonia as a nitrogen source. In Salmonella agona (strain SL483), this protein is NH(3)-dependent NAD(+) synthetase.